The following is a 478-amino-acid chain: Patatin-like phospholipase domain-containing protein 2 (478 aa).

Over 1 to 8 the chain is Cytoplasmic; it reads MFPRETKW. The chain crosses the membrane as a helical span at residues 9 to 29; the sequence is NISFAGCGFLGVYHIGVASCL. A PNPLA domain is found at 10–179; sequence ISFAGCGFLG…SDNLPLYELK (170 aa). The short motif at 14-19 is the GXGXXG element; it reads GCGFLG. Residues 30–42 are Extracellular-facing; sequence REHAPFLVANATH. N39 is a glycosylation site (N-linked (GlcNAc...) asparagine). A helical transmembrane segment spans residues 43–63; sequence IYGASAGALTATALVTGACLG. Residues 45–49 carry the GXSXG motif; the sequence is GASAG. S47 functions as the Nucleophile in the catalytic mechanism. Residues 64–137 lie on the Cytoplasmic side of the membrane; sequence EAGANIIEVS…IISHFSSKDE (74 aa). A Glycyl lysine isopeptide (Lys-Gly) (interchain with G-Cter in ubiquitin) cross-link involves residue K92. Residues 138 to 158 form a helical membrane-spanning segment; it reads LIQANVCSTFIPVYCGLIPPT. Over 159–323 the chain is Extracellular; sequence LQGVRYVDGG…TTLSNMLPVR (165 aa). D166 acts as the Proton acceptor in catalysis. Residues 166–168 carry the DGA/G motif; the sequence is DGG. A helical membrane pass occupies residues 324–344; the sequence is LATAMMVPYTLPLESAVSFTI. The Cytoplasmic portion of the chain corresponds to 345–478; it reads RLLEWLPDVP…PQDPSGLPPC (134 aa). S366 is subject to Phosphoserine; in vitro. S388 carries the phosphoserine; by PKA modification. 2 positions are modified to phosphoserine: S398 and S422. Residues 456-478 are disordered; that stretch reads RAPASPTATDPATPQDPSGLPPC. The segment covering 457-478 has biased composition (low complexity); the sequence is APASPTATDPATPQDPSGLPPC. S460 is subject to Phosphoserine; in vitro.

As to quaternary structure, interacts with ABHD5; this association stimulates PNPLA2 triglyceride hydrolase activity. Interacts with SERPINF1; this interaction stimulates the phospholipase A2 activity of PNPLA2. Despite a colocalization in lipid droplets, it probably does not interact with PLIN. Interacts with PLIN5; prevents interaction with ABHD5. Interacts with FAF2. In terms of processing, phosphorylation at Ser-398 by PKA is increased during fasting and moderate intensity exercise, and moderately increases lipolytic activity. Ubiquitinated by PEX2 in response to reactive oxygen species (ROS), leading to its degradation. Ubiquitination is stimulated by LDAH.

It localises to the lipid droplet. It is found in the cell membrane. The protein resides in the cytoplasm. It carries out the reaction a triacylglycerol + H2O = a diacylglycerol + a fatty acid + H(+). The enzyme catalyses a triacylglycerol + H2O = a 1,2-diacylglycerol + a fatty acid + H(+). The catalysed reaction is a triacylglycerol + H2O = a 1,3-diacylglycerol + a fatty acid + H(+). It catalyses the reaction a triacyl-sn-glycerol + H2O = a 1,3-diacyl-sn-glycerol + a fatty acid + H(+). It carries out the reaction a triacyl-sn-glycerol + H2O = a 2,3-diacyl-sn-glycerol + a fatty acid + H(+). The enzyme catalyses a 1-acylglycerol + a 1,3-diacylglycerol = a triacylglycerol + glycerol. The catalysed reaction is a 1-acylglycerol + a 1,2-diacylglycerol = a triacylglycerol + glycerol. It catalyses the reaction 2 a 1-acylglycerol = a 1,2-diacylglycerol + glycerol. It carries out the reaction a triacylglycerol + all-trans-retinol = an all-trans-retinyl ester + a diacylglycerol. The enzyme catalyses 1,2-di-(9Z-octadecenoyl)-glycerol + (9Z)-octadecenoate + H(+) = 1,2,3-tri-(9Z-octadecenoyl)-glycerol + H2O. The catalysed reaction is 1,2,3-tri-(9Z-octadecenoyl)-glycerol + H2O = 1,3-di-(9Z-octadecenoyl)-glycerol + (9Z)-octadecenoate + H(+). It catalyses the reaction 1-(9Z-octadecenoyl)-glycerol + 1,3-di-(9Z-octadecenoyl)-glycerol = 1,2,3-tri-(9Z-octadecenoyl)-glycerol + glycerol. It carries out the reaction 1-(9Z-octadecenoyl)-glycerol + 1,2-di-(9Z-octadecenoyl)-glycerol = 1,2,3-tri-(9Z-octadecenoyl)-glycerol + glycerol. The enzyme catalyses 2 1-(9Z-octadecenoyl)-glycerol = 1,2-di-(9Z-octadecenoyl)-glycerol + glycerol. The catalysed reaction is 1,2,3-tri-(9Z-octadecenoyl)-glycerol + all-trans-retinol = all-trans-retinyl 9Z-octadecenoate + di-(9Z)-octadecenoylglycerol. It catalyses the reaction 1,2,3-tri-(9Z)-hexadecenoylglycerol + H2O = 1,3-di-(9Z)-hexadecenoylglycerol + (9Z)-hexadecenoate + H(+). It carries out the reaction 1,2,3-tri-(9Z,12Z)-octadecadienoylglycerol + H2O = 1,3-di-(9Z,12Z)-octadecadienoylglycerol + (9Z,12Z)-octadecadienoate + H(+). The enzyme catalyses 1,2,3-tri-(9Z,12Z,15Z)-octadecatrienoylglycerol + H2O = 1,3-di-(9Z,12Z,15Z)-octadecatrienoylglycerol + (9Z,12Z,15Z)-octadecatrienoate + H(+). The catalysed reaction is 1,3-di-(9Z)-octadecenoyl-2-hexadecanoylglycerol + H2O = 1,3-di-(9Z-octadecenoyl)-glycerol + hexadecanoate + H(+). It catalyses the reaction 1,2-di-(9Z)-octadecenoyl-3-hexadecanoyl-sn-glycerol + H2O = 1-(9Z)-octadecenoyl-3-hexadecanoyl-sn-glycerol + (9Z)-octadecenoate + H(+). It carries out the reaction 1-hexadecanoyl-2,3-di-(9Z)-octadecenoyl-sn-glycerol + H2O = 1-hexadecanoyl-3-(9Z)-octadecenoyl-sn-glycerol + (9Z)-octadecenoate + H(+). The enzyme catalyses 1,2,3-tri-(9Z-octadecenoyl)-glycerol + H2O = 2,3-di-(9Z)-octadecenoyl-sn-glycerol + (9Z)-octadecenoate + H(+). The catalysed reaction is 1,2,3-tri-(9Z)-hexadecenoylglycerol + H2O = 2,3-di-(9Z)-hexadecenoyl-sn-glycerol + (9Z)-hexadecenoate + H(+). It catalyses the reaction 1,2,3-tri-(9Z,12Z)-octadecadienoylglycerol + H2O = 2,3-di-(9Z,12Z)-octadecadienoyl-sn-glycerol + (9Z,12Z)-octadecadienoate + H(+). It carries out the reaction 1,2,3-tri-(9Z,12Z,15Z)-octadecatrienoylglycerol + H2O = 2,3-di-(9Z,12Z,15Z)-octadecatrienoyl-sn-glycerol + (9Z,12Z,15Z)-octadecatrienoate + H(+). The enzyme catalyses 1,3-di-(9Z)-octadecenoyl-2-hexadecanoylglycerol + H2O = 2-hexadecanoyl-3-(9Z)-octadecenoyl-sn-glycerol + (9Z)-octadecenoate + H(+). The catalysed reaction is 1-hexadecanoyl-2,3-di-(9Z)-octadecenoyl-sn-glycerol + H2O = 2,3-di-(9Z)-octadecenoyl-sn-glycerol + hexadecanoate + H(+). It catalyses the reaction 1,2-di-(9Z)-octadecenoyl-3-hexadecanoyl-sn-glycerol + H2O = 2-(9Z-octadecenoyl)-3-hexadecanoyl-sn-glycerol + (9Z)-octadecenoate + H(+). It carries out the reaction a 1,2-diacyl-sn-glycero-3-phosphocholine + H2O = a 1-acyl-sn-glycero-3-phosphocholine + a fatty acid + H(+). The enzyme catalyses 1,2,3-tri-(9Z-octadecenoyl)-glycerol + 9-hydroxy-octadecanoate = 9-(9Z-octadecenoyloxy)-octadecanoate + 2,3-di-(9Z)-octadecenoyl-sn-glycerol. The catalysed reaction is 1-hexadecanoyl-2,3-di-(9Z)-octadecenoyl-sn-glycerol + 9-hydroxy-octadecanoate = 9-hexadecanoyloxy-octadecanoate + 2,3-di-(9Z)-octadecenoyl-sn-glycerol. It catalyses the reaction 1,2,3-tri-(10Z)-heptadecenoylglycerol + 9-hydroxy-octadecanoate = 2,3-di-(10Z-heptadecenoyl)-sn-glycerol + 9-(10Z-heptadecenoyloxy)-octadecanoate. It carries out the reaction 1,2,3-tri-(9Z,12Z)-octadecadienoylglycerol + 9-hydroxy-octadecanoate = 2,3-di-(9Z,12Z)-octadecadienoyl-sn-glycerol + 9-(9Z,12Z-octadecadienoyloxy)-octadecanoate. The enzyme catalyses 1,2,3-tri-(9Z)-hexadecenoylglycerol + 9-hydroxy-octadecanoate = 2,3-di-(9Z)-hexadecenoyl-sn-glycerol + 9-(9Z-hexadecenoyloxy)-octadecanoate. The catalysed reaction is 9-hydroxy-octadecanoate + 1,2-di-(9Z-octadecenoyl)-sn-glycerol = 9-(9Z-octadecenoyloxy)-octadecanoate + 2-(9Z-octadecenoyl)-glycerol. It catalyses the reaction 1-hexadecanoyl-2,3-di-(9Z)-octadecenoyl-sn-glycerol + 9-hydroxy-octadecanoate = 1-hexadecanoyl-3-(9Z)-octadecenoyl-sn-glycerol + 9-(9Z-octadecenoyloxy)-octadecanoate. It functions in the pathway glycerolipid metabolism; triacylglycerol degradation. In terms of biological role, catalyzes the initial step in triglyceride hydrolysis in adipocyte and non-adipocyte lipid droplets. Exhibits a strong preference for the hydrolysis of long-chain fatty acid esters at the sn-2 position of the glycerol backbone and acts coordinately with LIPE/HLS and DGAT2 within the lipolytic cascade. Also possesses acylglycerol transacylase and phospholipase A2 activities. Transfers fatty acid from triglyceride to retinol, hydrolyzes retinylesters, and generates 1,3-diacylglycerol from triglycerides. Regulates adiposome size and may be involved in the degradation of adiposomes. Catalyzes the formation of an ester bond between hydroxy fatty acids and fatty acids derived from triglycerides or diglycerides to generate fatty acid esters of hydroxy fatty acids (FAHFAs) in adipocytes. Acts antagonistically with LDAH in regulation of cellular lipid stores. Inhibits LDAH-stimulated lipid droplet fusion. May play an important role in energy homeostasis. May play a role in the response of the organism to starvation, enhancing hydrolysis of triglycerides and providing free fatty acids to other tissues to be oxidized in situations of energy depletion. The sequence is that of Patatin-like phospholipase domain-containing protein 2 from Rattus norvegicus (Rat).